The following is a 120-amino-acid chain: NAD(P)H-quinone oxidoreductase subunit 3, chloroplastic (120 aa).

3 helical membrane-spanning segments follow: residues Tyr7–Ile27, Met64–Met84, and Ile88–Ser108.

Belongs to the complex I subunit 3 family. NDH is composed of at least 16 different subunits, 5 of which are encoded in the nucleus.

It is found in the plastid. Its subcellular location is the chloroplast thylakoid membrane. The catalysed reaction is a plastoquinone + NADH + (n+1) H(+)(in) = a plastoquinol + NAD(+) + n H(+)(out). The enzyme catalyses a plastoquinone + NADPH + (n+1) H(+)(in) = a plastoquinol + NADP(+) + n H(+)(out). In terms of biological role, NDH shuttles electrons from NAD(P)H:plastoquinone, via FMN and iron-sulfur (Fe-S) centers, to quinones in the photosynthetic chain and possibly in a chloroplast respiratory chain. The immediate electron acceptor for the enzyme in this species is believed to be plastoquinone. Couples the redox reaction to proton translocation, and thus conserves the redox energy in a proton gradient. This Cycas taitungensis (Prince sago) protein is NAD(P)H-quinone oxidoreductase subunit 3, chloroplastic.